Reading from the N-terminus, the 189-residue chain is Endoribonuclease YbeY (189 aa).

Residues 1–10 (MKERSSSPGT) are compositionally biased toward polar residues. The tract at residues 1–23 (MKERSSSPGTPDSGRRARPKPAK) is disordered. Histidine 141, histidine 145, and histidine 151 together coordinate Zn(2+).

It belongs to the endoribonuclease YbeY family. Zn(2+) is required as a cofactor.

It localises to the cytoplasm. Functionally, single strand-specific metallo-endoribonuclease involved in late-stage 70S ribosome quality control and in maturation of the 3' terminus of the 16S rRNA. The polypeptide is Endoribonuclease YbeY (Nitrosospira multiformis (strain ATCC 25196 / NCIMB 11849 / C 71)).